The primary structure comprises 191 residues: Flavin prenyltransferase UbiX (191 aa).

FMN is bound by residues 13 to 15 (GAS), threonine 39, 90 to 93 (TMKT), and arginine 125. Residues tyrosine 155 and lysine 171 each contribute to the dimethylallyl phosphate site.

Belongs to the UbiX/PAD1 family.

It catalyses the reaction dimethylallyl phosphate + FMNH2 = prenylated FMNH2 + phosphate. In terms of biological role, flavin prenyltransferase that catalyzes the synthesis of the prenylated FMN cofactor (prenyl-FMN) for 4-hydroxy-3-polyprenylbenzoic acid decarboxylase UbiD. The prenyltransferase is metal-independent and links a dimethylallyl moiety from dimethylallyl monophosphate (DMAP) to the flavin N5 and C6 atoms of FMN. The chain is Flavin prenyltransferase UbiX from Methanothermobacter thermautotrophicus (strain ATCC 29096 / DSM 1053 / JCM 10044 / NBRC 100330 / Delta H) (Methanobacterium thermoautotrophicum).